The chain runs to 112 residues: UPF0102 protein Spea_0251 (112 aa).

Belongs to the UPF0102 family.

This Shewanella pealeana (strain ATCC 700345 / ANG-SQ1) protein is UPF0102 protein Spea_0251.